The following is a 147-amino-acid chain: uncharacterized protein (147 aa).

A disordered region spans residues 110-133; that stretch reads VLEPPTPSQPAPTPEPAVKPQPIA. The span at 113-128 shows a compositional bias: pro residues; it reads PPTPSQPAPTPEPAVK.

This is an uncharacterized protein from Ictalurid herpesvirus 1 (strain Auburn) (IcHV-1).